The following is a 31-amino-acid chain: Cytochrome b6-f complex subunit 8 (31 aa).

The helical transmembrane segment at 5-25 threads the bilayer; sequence IVSLAWAALMVVFTFSLSLVV.

The protein belongs to the PetN family. The 4 large subunits of the cytochrome b6-f complex are cytochrome b6, subunit IV (17 kDa polypeptide, PetD), cytochrome f and the Rieske protein, while the 4 small subunits are PetG, PetL, PetM and PetN. The complex functions as a dimer.

The protein localises to the plastid. It localises to the chloroplast thylakoid membrane. Its function is as follows. Component of the cytochrome b6-f complex, which mediates electron transfer between photosystem II (PSII) and photosystem I (PSI), cyclic electron flow around PSI, and state transitions. The chain is Cytochrome b6-f complex subunit 8 from Cicer arietinum (Chickpea).